We begin with the raw amino-acid sequence, 568 residues long: Protein KATNIP homolog (568 aa).

Positions 1 to 20 are enriched in basic and acidic residues; the sequence is MSDSDLKEIEKNAENIKLEP. A disordered region spans residues 1-30; that stretch reads MSDSDLKEIEKNAENIKLEPAEDEVNEEDQ. Acidic residues predominate over residues 21 to 30; it reads AEDEVNEEDQ.

Expressed in most ciliated neuronal cells. Not expressed in non-ciliated cells.

The protein localises to the cytoplasm. It is found in the cytoskeleton. The protein resides in the cilium axoneme. Its subcellular location is the cilium basal body. In terms of biological role, may regulate ciliary A-tubule number and, along with arl-13, controls cilium integrity. The chain is Protein KATNIP homolog from Caenorhabditis elegans.